Here is a 215-residue protein sequence, read N- to C-terminus: Adenylate kinase (215 aa).

Position 10–15 (glycine 10–threonine 15) interacts with ATP. The segment at serine 30–valine 59 is NMP. Residues threonine 31, arginine 36, glycine 57–valine 59, glycine 85–arginine 88, and glutamine 92 each bind AMP. Positions glycine 122–aspartate 159 are LID. Residues arginine 123 and threonine 132 to tyrosine 133 each bind ATP. 2 residues coordinate AMP: arginine 156 and arginine 167. Glutamine 200 provides a ligand contact to ATP.

Belongs to the adenylate kinase family. Monomer.

Its subcellular location is the cytoplasm. It catalyses the reaction AMP + ATP = 2 ADP. The protein operates within purine metabolism; AMP biosynthesis via salvage pathway; AMP from ADP: step 1/1. Catalyzes the reversible transfer of the terminal phosphate group between ATP and AMP. Plays an important role in cellular energy homeostasis and in adenine nucleotide metabolism. In Neisseria meningitidis serogroup C (strain 053442), this protein is Adenylate kinase.